Here is a 117-residue protein sequence, read N- to C-terminus: MRHKVSGRRFDRPTGQRMSLYRNLVTDLLNYEEITISEPRAKEIRSMAEKMITLGKKGTLASRRRALAFVYMPGIVEKVFEDLSKRYAERPGGYTRMTKLGPRQGDGAEMVKLELIK.

It belongs to the bacterial ribosomal protein bL17 family. Part of the 50S ribosomal subunit. Contacts protein L32.

This is Large ribosomal subunit protein bL17 from Dehalococcoides mccartyi (strain ATCC BAA-2100 / JCM 16839 / KCTC 5957 / BAV1).